The chain runs to 87 residues: Small ribosomal subunit protein bS20 (87 aa).

The disordered stretch occupies residues 1-22; it reads MANSAQARKRARQAVKQRAHNA. Positions 7–19 are enriched in basic residues; it reads ARKRARQAVKQRA.

The protein belongs to the bacterial ribosomal protein bS20 family.

Binds directly to 16S ribosomal RNA. The sequence is that of Small ribosomal subunit protein bS20 from Methylobacillus flagellatus (strain ATCC 51484 / DSM 6875 / VKM B-1610 / KT).